The chain runs to 423 residues: Glycine amidinotransferase, mitochondrial (423 aa).

A mitochondrion-targeting transit peptide spans 1 to 43; the sequence is MLRVRCLRGGSRGAEALHYIGSRLGRTVTGWVQRTFQSTQAAT. A phosphoserine mark is found at Ser46 and Ser49. Asp170 is an arginine binding site. Active-site residues include Asp254 and His303. Arginine is bound by residues Asp305, Arg322, Ser354, and Ser355. An N6-acetyllysine modification is found at Lys385. Cys407 functions as the Amidino-cysteine intermediate in the catalytic mechanism.

This sequence belongs to the amidinotransferase family. In terms of assembly, homodimer.

The protein localises to the mitochondrion inner membrane. The catalysed reaction is L-arginine + glycine = guanidinoacetate + L-ornithine. It catalyses the reaction 4-aminobutanoate + L-arginine = 4-guanidinobutanoate + L-ornithine. It carries out the reaction beta-alanine + L-arginine = 3-guanidinopropanoate + L-ornithine. The enzyme catalyses taurine + L-arginine = taurocyamine + L-ornithine. It participates in amine and polyamine biosynthesis; creatine biosynthesis; creatine from L-arginine and glycine: step 1/2. Transamidinase that catalyzes the transfer of the amidino group of L-arginine onto the amino moiety of acceptor metabolites such as glycine, beta-alanine, gamma-aminobutyric acid (GABA) and taurine yielding the corresponding guanidine derivatives. Catalyzes the rate-limiting step of creatine biosynthesis, namely the transfer of the amidino group from L-arginine to glycine to generate guanidinoacetate, which is then methylated by GAMT to form creatine. Provides creatine as a source for ATP generation in tissues with high energy demands, in particular skeletal muscle, heart and brain. The protein is Glycine amidinotransferase, mitochondrial (GATM) of Bos taurus (Bovine).